The sequence spans 442 residues: MSVLWSHCISKLEGELPPQQFNTWIRPLQAVEDGGELRLLAPNRFVLDWVKQHFIGKIEEVVSEQNRDSAPNVVLEIGSRAAEAAQMRSANPPRKTAPARKQVPNNLNSAFIFGNFVEGKSNQLAKAASLQVAQNVGRAYNPLFIYGGVGLGKTHLMHAIGNEILRGNPAANIVYLHSERFVSDMVKALQHNAINAFKEFYRTVDALLIDDIQFFAGKERSQEEFFHTFNTLLENKHQVVLTCDRYPKEIKGLEERLKSRFGWGLPVAIEPPDLETRVAILMSKAQQSGIDLSPEVAFFIGKRIRSNIRELEGALRRVIANAQFTGRPITLEFAKEALRDLIALQDRMINVENIQKTVSEYFKIRQADLLSNKRTRSLTRPRQIAMALSKELTSHSLPEIGQMFGGRDHTTVLHACRKVQELKESDARFMEDFSNLLRILSN.

Residues 1-84 (MSVLWSHCIS…LEIGSRAAEA (84 aa)) are domain I, interacts with DnaA modulators. The domain II stretch occupies residues 84–105 (AAQMRSANPPRKTAPARKQVPN). The interval 106–322 (NLNSAFIFGN…GALRRVIANA (217 aa)) is domain III, AAA+ region. ATP contacts are provided by glycine 150, glycine 152, lysine 153, and threonine 154. A domain IV, binds dsDNA region spans residues 323–442 (QFTGRPITLE…FSNLLRILSN (120 aa)).

This sequence belongs to the DnaA family. As to quaternary structure, oligomerizes as a right-handed, spiral filament on DNA at oriC.

It is found in the cytoplasm. Its function is as follows. Plays an essential role in the initiation and regulation of chromosomal replication. ATP-DnaA binds to the origin of replication (oriC) to initiate formation of the DNA replication initiation complex once per cell cycle. Binds the DnaA box (a 9 base pair repeat at the origin) and separates the double-stranded (ds)DNA. Forms a right-handed helical filament on oriC DNA; dsDNA binds to the exterior of the filament while single-stranded (ss)DNA is stabiized in the filament's interior. The ATP-DnaA-oriC complex binds and stabilizes one strand of the AT-rich DNA unwinding element (DUE), permitting loading of DNA polymerase. After initiation quickly degrades to an ADP-DnaA complex that is not apt for DNA replication. Binds acidic phospholipids. The chain is Chromosomal replication initiator protein DnaA from Methylococcus capsulatus (strain ATCC 33009 / NCIMB 11132 / Bath).